We begin with the raw amino-acid sequence, 1378 residues long: DNA-directed RNA polymerase subunit beta (1378 aa).

Belongs to the RNA polymerase beta chain family. As to quaternary structure, the RNAP catalytic core consists of 2 alpha, 1 beta, 1 beta' and 1 omega subunit. When a sigma factor is associated with the core the holoenzyme is formed, which can initiate transcription.

The catalysed reaction is RNA(n) + a ribonucleoside 5'-triphosphate = RNA(n+1) + diphosphate. Functionally, DNA-dependent RNA polymerase catalyzes the transcription of DNA into RNA using the four ribonucleoside triphosphates as substrates. The chain is DNA-directed RNA polymerase subunit beta from Ruegeria pomeroyi (strain ATCC 700808 / DSM 15171 / DSS-3) (Silicibacter pomeroyi).